The sequence spans 518 residues: Metalloprotease TIKI2 (518 aa).

The N-terminal stretch at methionine 1 to alanine 22 is a signal peptide. The Extracellular portion of the chain corresponds to arginine 23–proline 499. N-linked (GlcNAc...) asparagine glycosylation is found at asparagine 224, asparagine 233, asparagine 282, asparagine 325, and asparagine 340. The chain crosses the membrane as a helical span at residues threonine 500–alanine 517. A topological domain (cytoplasmic) is located at residue serine 518.

The protein belongs to the TIKI family. It depends on Mn(2+) as a cofactor. The cofactor is Co(2+).

Its subcellular location is the cell membrane. Functionally, metalloprotease that acts as a negative regulator of the Wnt signaling pathway by mediating the cleavage of the N-terminal residues of a subset of Wnt proteins. Following cleavage, Wnt proteins become oxidized and form large disulfide-bond oligomers, leading to their inactivation. This is Metalloprotease TIKI2 (trabd2b) from Danio rerio (Zebrafish).